The chain runs to 83 residues: Exodeoxyribonuclease 7 small subunit (83 aa).

Belongs to the XseB family. In terms of assembly, heterooligomer composed of large and small subunits.

It is found in the cytoplasm. It catalyses the reaction Exonucleolytic cleavage in either 5'- to 3'- or 3'- to 5'-direction to yield nucleoside 5'-phosphates.. Bidirectionally degrades single-stranded DNA into large acid-insoluble oligonucleotides, which are then degraded further into small acid-soluble oligonucleotides. This chain is Exodeoxyribonuclease 7 small subunit, found in Bradyrhizobium sp. (strain BTAi1 / ATCC BAA-1182).